Consider the following 355-residue polypeptide: UDP-N-acetylglucosamine--N-acetylmuramyl-(pentapeptide) pyrophosphoryl-undecaprenol N-acetylglucosamine transferase (355 aa).

UDP-N-acetyl-alpha-D-glucosamine-binding positions include 12-14 (TGG), N124, R160, S192, I243, 262-267 (ALTVCE), and Q287.

This sequence belongs to the glycosyltransferase 28 family. MurG subfamily.

The protein localises to the cell inner membrane. It carries out the reaction di-trans,octa-cis-undecaprenyl diphospho-N-acetyl-alpha-D-muramoyl-L-alanyl-D-glutamyl-meso-2,6-diaminopimeloyl-D-alanyl-D-alanine + UDP-N-acetyl-alpha-D-glucosamine = di-trans,octa-cis-undecaprenyl diphospho-[N-acetyl-alpha-D-glucosaminyl-(1-&gt;4)]-N-acetyl-alpha-D-muramoyl-L-alanyl-D-glutamyl-meso-2,6-diaminopimeloyl-D-alanyl-D-alanine + UDP + H(+). It participates in cell wall biogenesis; peptidoglycan biosynthesis. Its function is as follows. Cell wall formation. Catalyzes the transfer of a GlcNAc subunit on undecaprenyl-pyrophosphoryl-MurNAc-pentapeptide (lipid intermediate I) to form undecaprenyl-pyrophosphoryl-MurNAc-(pentapeptide)GlcNAc (lipid intermediate II). The polypeptide is UDP-N-acetylglucosamine--N-acetylmuramyl-(pentapeptide) pyrophosphoryl-undecaprenol N-acetylglucosamine transferase (Haemophilus ducreyi (strain 35000HP / ATCC 700724)).